The following is a 165-amino-acid chain: METLQGLLLWLLLSMGGAQASREPLRPLCRPINATLAAEKEACPVCVTVNTTICAGYCPTMMRVLQAVLPPVPQVVCNYREVRFESIRLPGCPPGVDPMVSVPVALSCRCALCRRSTSDCGGPKDHPLTCDDPNLQASSSSKDPPPSPPSPSRLLEPAGTPFLPQ.

An N-terminal signal peptide occupies residues 1 to 20 (METLQGLLLWLLLSMGGAQA). 6 disulfides stabilise this stretch: cysteine 29–cysteine 77, cysteine 43–cysteine 92, cysteine 46–cysteine 130, cysteine 54–cysteine 108, cysteine 58–cysteine 110, and cysteine 113–cysteine 120. N-linked (GlcNAc...) asparagine glycans are attached at residues asparagine 33 and asparagine 50. Positions 131 to 165 (DDPNLQASSSSKDPPPSPPSPSRLLEPAGTPFLPQ) are disordered. Residues serine 141, serine 147, and serine 152 are each glycosylated (O-linked (GalNAc...) serine).

It belongs to the glycoprotein hormones subunit beta family. As to quaternary structure, heterodimer of a common alpha chain and a unique beta chain which confers biological specificity to thyrotropin, lutropin, follitropin and gonadotropin. Placenta.

The protein resides in the secreted. Functionally, stimulates the ovaries to synthesize the steroids that are essential for the maintenance of pregnancy. This chain is Choriogonadotropin subunit beta (CGB), found in Papio anubis (Olive baboon).